The following is a 271-amino-acid chain: Peroxisomal biogenesis factor 2 (271 aa).

The Peroxisomal matrix segment spans residues 1–2 (MS). The helical transmembrane segment at 3–29 (RVAQLDSIALDKELYGQFWSEFNAAFN) threads the bilayer. The Cytoplasmic segment spans residues 30-33 (TSEH). The helical transmembrane segment at 34-60 (KEEWELALNTVVFMCATRFLPHYGSSC) threads the bilayer. Residues 61-77 (TYGSALSGVVFQCRKRT) are Peroxisomal matrix-facing. A helical transmembrane segment spans residues 78–97 (LYVVTVLAGYVWKKITHIIF). Over 98-101 (NGPH) the chain is Cytoplasmic. A helical membrane pass occupies residues 102–133 (CGNQMMWLKLYKWVNLLYHGCDVTNFLRFLAA). The Peroxisomal matrix portion of the chain corresponds to 134–175 (EGPNARAFLSPLYRAFNVHSTRLIRDGSAIASEFYSNSVFAG). A helical membrane pass occupies residues 176–197 (LEYQNRQLLWNALLELFSNTLL). The Cytoplasmic portion of the chain corresponds to 198–271 (TKRGLLTFVK…SGRLTASPVY (74 aa)). Zn(2+)-binding residues include Cys222, Cys225, Cys237, Cys238, Cys243, Cys246, Cys256, and Cys259. The segment at 222–259 (CPRCGGFPTNPYQIACCRANYCYVCVVKALEWSMCDAC) adopts an RING-type zinc-finger fold.

This sequence belongs to the pex2/pex10/pex12 family. Component of the PEX2-PEX10-PEX12 retrotranslocation channel, composed of PEX2, PEX10 and PEX12.

The protein resides in the peroxisome membrane. It carries out the reaction [E2 ubiquitin-conjugating enzyme]-S-ubiquitinyl-L-cysteine + [acceptor protein]-L-cysteine = [E2 ubiquitin-conjugating enzyme]-L-cysteine + [acceptor protein]-S-ubiquitinyl-L-cysteine.. The protein operates within protein modification; protein ubiquitination. Its function is as follows. E3 ubiquitin-protein ligase component of a retrotranslocation channel required for peroxisome organization by mediating export of the PEX5 receptor from peroxisomes to the cytosol, thereby promoting PEX5 recycling. The retrotranslocation channel is composed of PEX2, PEX10 and PEX12; each subunit contributing transmembrane segments that coassemble into an open channel that specifically allows the passage of PEX5 through the peroxisomal membrane. PEX2 also regulates peroxisome organization by acting as a E3 ubiquitin-protein ligase. PEX2 ubiquitinates PEX5 during its passage through the retrotranslocation channel: catalyzes monoubiquitination of PEX5 at 'Cys-6', a modification that acts as a signal for PEX5 extraction into the cytosol. This is Peroxisomal biogenesis factor 2 from Saccharomyces cerevisiae (strain ATCC 204508 / S288c) (Baker's yeast).